The chain runs to 728 residues: Hepatocyte growth factor (728 aa).

The first 32 residues, 1–32 (MMWGTKLLPVLLLQHVLLHLLLLPVTIPYAEG), serve as a signal peptide directing secretion. Pyrrolidone carboxylic acid is present on Gln-33. Positions 38 to 124 (NTLHEFKKSA…HEFDLYENKD (87 aa)) constitute a PAN domain. Disulfide bonds link Cys-71–Cys-97, Cys-75–Cys-85, Cys-129–Cys-207, Cys-150–Cys-190, Cys-178–Cys-202, Cys-212–Cys-289, Cys-233–Cys-272, and Cys-261–Cys-284. Kringle domains are found at residues 129–207 (CIIG…IPQC) and 212–289 (CMTC…IKMC). Asn-295 is a glycosylation site (N-linked (GlcNAc...) asparagine). 11 disulfide bridges follow: Cys-306/Cys-384, Cys-327/Cys-366, Cys-355/Cys-378, Cys-392/Cys-470, Cys-413/Cys-453, Cys-441/Cys-465, Cys-488/Cys-607, Cys-520/Cys-536, Cys-615/Cys-682, Cys-645/Cys-661, and Cys-672/Cys-700. Kringle domains follow at residues 306–384 (CIKG…IPKC) and 392–470 (CYRG…ISRC). N-linked (GlcNAc...) asparagine glycosylation occurs at Asn-403. Residues 496-724 (VVNGIPTQTT…YAKWIHKVIL (229 aa)) form the Peptidase S1 domain. Residues Asn-569 and Asn-656 are each glycosylated (N-linked (GlcNAc...) asparagine).

It belongs to the peptidase S1 family. Plasminogen subfamily. Dimer of an alpha chain and a beta chain linked by a disulfide bond. Interacts with SRPX2; the interaction increases HGF mitogenic activity. The single-chain precursor undergoes proteolytic processing by TMPRSS13 resulting in an active two-chain form. The single-chain precursor undergoes proteolytic processing by HGFAC resulting in an active two-chain form.

Functionally, potent mitogen for mature parenchymal hepatocyte cells, seems to be a hepatotrophic factor, and acts as a growth factor for a broad spectrum of tissues and cell types. Activating ligand for the receptor tyrosine kinase MET by binding to it and promoting its dimerization. Activates MAPK signaling following TMPRSS13 cleavage and activation. The sequence is that of Hepatocyte growth factor (Hgf) from Rattus norvegicus (Rat).